Here is a 195-residue protein sequence, read N- to C-terminus: uncharacterized protein (195 aa).

The segment at 1 to 35 (MASSSSAALRPFGTARLTPGRQTGRQTQQQISAPE) is disordered. The segment covering 20–30 (GRQTGRQTQQQ) has biased composition (low complexity). An MSP domain is found at 76–184 (GVTVIPRVAR…PASINMALEA (109 aa)).

This is an uncharacterized protein from Caenorhabditis elegans.